The sequence spans 107 residues: UPF0145 protein TT_C0892 (107 aa).

Belongs to the UPF0145 family.

The chain is UPF0145 protein TT_C0892 from Thermus thermophilus (strain ATCC BAA-163 / DSM 7039 / HB27).